Here is a 271-residue protein sequence, read N- to C-terminus: 3-methyl-2-oxobutanoate hydroxymethyltransferase (271 aa).

Residues D42 and D86 each contribute to the Mg(2+) site. 3-methyl-2-oxobutanoate is bound by residues 42–43 (DS), D86, and K116. E118 lines the Mg(2+) pocket. E185 serves as the catalytic Proton acceptor.

This sequence belongs to the PanB family. In terms of assembly, homodecamer; pentamer of dimers. The cofactor is Mg(2+).

The protein resides in the cytoplasm. It catalyses the reaction 3-methyl-2-oxobutanoate + (6R)-5,10-methylene-5,6,7,8-tetrahydrofolate + H2O = 2-dehydropantoate + (6S)-5,6,7,8-tetrahydrofolate. The protein operates within cofactor biosynthesis; (R)-pantothenate biosynthesis; (R)-pantoate from 3-methyl-2-oxobutanoate: step 1/2. In terms of biological role, catalyzes the reversible reaction in which hydroxymethyl group from 5,10-methylenetetrahydrofolate is transferred onto alpha-ketoisovalerate to form ketopantoate. The protein is 3-methyl-2-oxobutanoate hydroxymethyltransferase of Synechococcus sp. (strain CC9605).